Here is a 548-residue protein sequence, read N- to C-terminus: Kinetochore and Eb1-associated basic protein (548 aa).

Disordered regions lie at residues 1–51 (MSSM…PKHP) and 82–181 (YRSS…IRPK). 3 stretches are compositionally biased toward basic and acidic residues: residues 20 to 29 (RTKELLERQR), 104 to 116 (RTWE…EFRS), and 127 to 141 (PRPR…DLRS). The tract at residues 100–253 (QNRQRTWEGP…TTSKRKLDFK (154 aa)) is important for kinetochore and microtubule localization. The span at 144 to 155 (QGTPATKIPSQR) shows a compositional bias: polar residues. The short motif at 149–152 (TKIP) is the SXIP motif 1 element. The span at 156-165 (NPKENQELSK) shows a compositional bias: basic and acidic residues. The segment covering 166–175 (SHTCIPSSEP) has biased composition (polar residues). An SXIP motif 2 motif is present at residues 168 to 171 (TCIP). The CH (calponin-homology)-like region, which is not required for kinetochore and microtubule localization stretch occupies residues 237–372 (SDKGIKLTTS…MCALPVVSEK (136 aa)). A coiled-coil region spans residues 386-457 (YDVMSLQQKF…LQLQRLRLQE (72 aa)).

As to quaternary structure, interacts with Eb1 via the two SxIP motifs; the interaction is not required for kebab kinetochore localization.

It localises to the cytoplasm. It is found in the perinuclear region. Its subcellular location is the chromosome. The protein localises to the centromere. The protein resides in the kinetochore. It localises to the cytoskeleton. It is found in the spindle. The chain is Kinetochore and Eb1-associated basic protein from Drosophila melanogaster (Fruit fly).